Reading from the N-terminus, the 397-residue chain is tRNA-specific 2-thiouridylase MnmA (397 aa).

ATP is bound by residues 19 to 26 and Leu45; that span reads AMSGGVDS. Cys113 serves as the catalytic Nucleophile. Cys113 and Cys210 are joined by a disulfide. Gly137 lines the ATP pocket. The segment at 160 to 162 is interaction with tRNA; it reads RDQ. Cys210 functions as the Cysteine persulfide intermediate in the catalytic mechanism.

Belongs to the MnmA/TRMU family.

The protein localises to the cytoplasm. The enzyme catalyses S-sulfanyl-L-cysteinyl-[protein] + uridine(34) in tRNA + AH2 + ATP = 2-thiouridine(34) in tRNA + L-cysteinyl-[protein] + A + AMP + diphosphate + H(+). In terms of biological role, catalyzes the 2-thiolation of uridine at the wobble position (U34) of tRNA, leading to the formation of s(2)U34. This is tRNA-specific 2-thiouridylase MnmA from Bradyrhizobium sp. (strain ORS 278).